Reading from the N-terminus, the 446-residue chain is Phosphoglucosamine mutase (446 aa).

The active-site Phosphoserine intermediate is the serine 100. Mg(2+) contacts are provided by serine 100, aspartate 239, aspartate 241, and aspartate 243. Serine 100 is subject to Phosphoserine.

Belongs to the phosphohexose mutase family. Mg(2+) is required as a cofactor. Post-translationally, activated by phosphorylation.

The enzyme catalyses alpha-D-glucosamine 1-phosphate = D-glucosamine 6-phosphate. Functionally, catalyzes the conversion of glucosamine-6-phosphate to glucosamine-1-phosphate. The sequence is that of Phosphoglucosamine mutase from Oceanobacillus iheyensis (strain DSM 14371 / CIP 107618 / JCM 11309 / KCTC 3954 / HTE831).